A 217-amino-acid chain; its full sequence is Adenylate kinase (217 aa).

10 to 15 (GAGKGT) provides a ligand contact to ATP. The NMP stretch occupies residues 30-59 (STGDMFRAAMKEETPLGLEAKSYIDKGELV). Residues Thr-31, Arg-36, 57–59 (ELV), 85–88 (GFPR), and Gln-92 contribute to the AMP site. Positions 126 to 163 (GRRICSVCGTTYHLVFNPPKTPGVCDKDGGDLYQRADD) are LID. Residue Arg-127 participates in ATP binding. Zn(2+) is bound by residues Cys-130 and Cys-133. An ATP-binding site is contributed by 136 to 137 (TY). Positions 150 and 153 each coordinate Zn(2+). Positions 160 and 171 each coordinate AMP. Residue Gln-199 coordinates ATP.

It belongs to the adenylate kinase family. In terms of assembly, monomer.

The protein localises to the cytoplasm. It catalyses the reaction AMP + ATP = 2 ADP. Its pathway is purine metabolism; AMP biosynthesis via salvage pathway; AMP from ADP: step 1/1. Catalyzes the reversible transfer of the terminal phosphate group between ATP and AMP. Plays an important role in cellular energy homeostasis and in adenine nucleotide metabolism. The sequence is that of Adenylate kinase from Bacillus velezensis (strain DSM 23117 / BGSC 10A6 / LMG 26770 / FZB42) (Bacillus amyloliquefaciens subsp. plantarum).